Reading from the N-terminus, the 279-residue chain is Movement protein (279 aa).

It belongs to the cucumovirus movement protein family.

It is found in the host cell junction. It localises to the host plasmodesma. Its function is as follows. Transports viral genome to neighboring plant cells directly through plasmosdesmata, without any budding. The movement protein allows efficient cell to cell propagation, by bypassing the host cell wall barrier. Acts by forming a tubular structure at the host plasmodesmata, enlarging it enough to allow free passage of virion capsids. This is Movement protein from Cucumis sativus (Cucumber).